The primary structure comprises 266 residues: MWTYPEIDPVALTFGPLQIHWYGLMYLAGFAFFWGYGSYKAKFSDHWTAERVGDFLFYGALGVILGGRIGYILFYDLAHYIAEPLDVFQVWKGGMAFHGGLIGVMVAMWLFARKMQVSMFVVADFVAPMVPVGLFFGRIGNFINGELWGKVTDSSLGMKVYDPTLNMVVSKYPTQLLEALLEGIVLFIILMFYTRSPRPLGAASGLFIGLYGLFRFYVEFFRLPDPQLGYLFWGWVTMGQLLSLPMILIGFALVVWAYRNNRVMAP.

Helical transmembrane passes span 14–34, 55–75, 91–111, and 117–137; these read FGPL…AFFW, FLFY…ILFY, WKGG…MWLF, and VSMF…LFFG. R138 contributes to the a 1,2-diacyl-sn-glycero-3-phospho-(1'-sn-glycerol) binding site. Helical transmembrane passes span 172-192, 201-221, and 235-255; these read YPTQ…ILMF, GAAS…VEFF, and WVTM…ALVV.

Belongs to the Lgt family.

The protein localises to the cell inner membrane. The catalysed reaction is L-cysteinyl-[prolipoprotein] + a 1,2-diacyl-sn-glycero-3-phospho-(1'-sn-glycerol) = an S-1,2-diacyl-sn-glyceryl-L-cysteinyl-[prolipoprotein] + sn-glycerol 1-phosphate + H(+). Its pathway is protein modification; lipoprotein biosynthesis (diacylglyceryl transfer). Catalyzes the transfer of the diacylglyceryl group from phosphatidylglycerol to the sulfhydryl group of the N-terminal cysteine of a prolipoprotein, the first step in the formation of mature lipoproteins. In Hydrogenovibrio crunogenus (strain DSM 25203 / XCL-2) (Thiomicrospira crunogena), this protein is Phosphatidylglycerol--prolipoprotein diacylglyceryl transferase.